A 213-amino-acid polypeptide reads, in one-letter code: MSKTSMQMGLDFTLVAEVEELVAGVDEVGRGPLCGAVVTAAVILDPNRPILGLNDSKKLTEAKREKLYDEICEKALSWCIARAEVEEIDELNILHATMLAMQRAVAGLHIQPKLAMIDGNRCPKLPMRSEAVVKGDSKVPAIAAASILAKVSRDREMAAFELIYPGYGISGHKGYPTPVHLEALVRLGPTPIHRRSFAPVRQAYEALEGLVQV.

One can recognise an RNase H type-2 domain in the interval 20-209 (ELVAGVDEVG…VRQAYEALEG (190 aa)). Asp26, Glu27, and Asp118 together coordinate a divalent metal cation.

Belongs to the RNase HII family. The cofactor is Mn(2+). Mg(2+) serves as cofactor.

The protein localises to the cytoplasm. The catalysed reaction is Endonucleolytic cleavage to 5'-phosphomonoester.. Its function is as follows. Endonuclease that specifically degrades the RNA of RNA-DNA hybrids. The protein is Ribonuclease HII of Pseudomonas fluorescens (strain Pf0-1).